A 564-amino-acid polypeptide reads, in one-letter code: Large neutral amino acids transporter small subunit 3 (564 aa).

The helical transmembrane segment at Val20–Leu40 threads the bilayer. N-linked (GlcNAc...) asparagine glycosylation is found at Asn54 and Asn57. A run of 5 helical transmembrane segments spans residues Leu78–Met98, Pro105–Ala124, Leu131–Phe151, Ser165–Ile185, and Ala191–Leu211. A phosphoserine mark is found at Ser262 and Ser267. A run of 2 helical transmembrane segments spans residues Ile303–Gly323 and Ser357–Met377. A glycan (N-linked (GlcNAc...) asparagine) is linked at Asn396. Ser398 bears the Phosphoserine mark. 4 consecutive transmembrane segments (helical) span residues Ala424 to Ile444, Leu451 to Leu471, Leu490 to Leu510, and Phe515 to Leu535. Asn558 carries an N-linked (GlcNAc...) asparagine glycan.

It belongs to the SLC43A transporter (TC 2.A.1.44) family. Expressed in the kidney cortex as well as liver, pancreas, and skeletal muscle. In kidney expressed in the glomerular tuft (at protein level). Expressed in liver, skeletal muscle and pancreas (at protein level).

Its subcellular location is the cell membrane. It localises to the apical cell membrane. The protein localises to the endoplasmic reticulum membrane. The enzyme catalyses D-leucine(in) = D-leucine(out). It catalyses the reaction L-leucine(in) = L-leucine(out). The catalysed reaction is L-isoleucine(in) = L-isoleucine(out). It carries out the reaction L-methionine(in) = L-methionine(out). The enzyme catalyses L-phenylalanine(in) = L-phenylalanine(out). It catalyses the reaction L-valine(in) = L-valine(out). Its function is as follows. Uniport that mediates the transport of neutral amino acids such as L-leucine, L-isoleucine, L-valine, and L-phenylalanine. The transport activity is sodium ions-independent, electroneutral and mediated by a facilitated diffusion. The sequence is that of Large neutral amino acids transporter small subunit 3 from Mus musculus (Mouse).